A 338-amino-acid polypeptide reads, in one-letter code: Heat-inducible transcription repressor HrcA (338 aa).

It belongs to the HrcA family.

Negative regulator of class I heat shock genes (grpE-dnaK-dnaJ and groELS operons). Prevents heat-shock induction of these operons. This is Heat-inducible transcription repressor HrcA from Streptomyces albus G.